We begin with the raw amino-acid sequence, 245 residues long: uncharacterized protein (245 aa).

The next 2 membrane-spanning stretches (helical) occupy residues 29 to 51 (LVVLIVSFLSILFSAGYAFRIGM) and 61 to 83 (TILFYGFVAAAFHFILSLYLMLH).

Its subcellular location is the cell membrane. This is an uncharacterized protein from Treponema pallidum (strain Nichols).